A 91-amino-acid chain; its full sequence is MTRMVQCAKLGKEAEGLDFPPLPGELGKRIYEGISKEAWQAWLKQQTMLINENRLNMADPRARQYLMKQTEKFFFGEGADTAQGYVPPSAE.

It belongs to the Fe(2+)-trafficking protein family.

Functionally, could be a mediator in iron transactions between iron acquisition and iron-requiring processes, such as synthesis and/or repair of Fe-S clusters in biosynthetic enzymes. The protein is Probable Fe(2+)-trafficking protein of Paraburkholderia phytofirmans (strain DSM 17436 / LMG 22146 / PsJN) (Burkholderia phytofirmans).